Reading from the N-terminus, the 132-residue chain is Transcriptional repressor SmtB homolog (132 aa).

8 residues coordinate Zn(2+): C20, H26, C71, C73, D114, H116, H127, and E130. The 95-residue stretch at 38-132 folds into the HTH arsR-type domain; that stretch reads MSLDQAQQMA…EVADHLQESD (95 aa). Residues 72 to 91 constitute a DNA-binding region (H-T-H motif); it reads VCDLAAAMKVSESAVSHQLR.

As to quaternary structure, homodimer.

In terms of biological role, transcriptional repressor of the expression of the ziaA gene. Controls zinc homeostasis by triggering ZiaA-mediated efflux of excess zinc into the periplasm. This is Transcriptional repressor SmtB homolog (ziaR) from Synechocystis sp. (strain ATCC 27184 / PCC 6803 / Kazusa).